Reading from the N-terminus, the 130-residue chain is Small ribosomal subunit protein uS9 (130 aa).

Belongs to the universal ribosomal protein uS9 family.

This is Small ribosomal subunit protein uS9 from Oceanobacillus iheyensis (strain DSM 14371 / CIP 107618 / JCM 11309 / KCTC 3954 / HTE831).